A 301-amino-acid polypeptide reads, in one-letter code: 5'-3' exonuclease (301 aa).

In terms of domain architecture, 5'-3' exonuclease spans 182–264; it reads GYADLALLRG…RVAADVPLPD (83 aa).

Functionally, 5'-3' exonuclease acting preferentially on double-stranded DNA. The sequence is that of 5'-3' exonuclease from Streptomyces coelicolor (strain ATCC BAA-471 / A3(2) / M145).